The sequence spans 354 residues: Uroporphyrinogen decarboxylase (354 aa).

Substrate-binding positions include 27-31 (RQAGR), Asp77, Tyr154, Thr209, and His327.

This sequence belongs to the uroporphyrinogen decarboxylase family. In terms of assembly, homodimer.

It localises to the cytoplasm. It catalyses the reaction uroporphyrinogen III + 4 H(+) = coproporphyrinogen III + 4 CO2. It functions in the pathway porphyrin-containing compound metabolism; protoporphyrin-IX biosynthesis; coproporphyrinogen-III from 5-aminolevulinate: step 4/4. Catalyzes the decarboxylation of four acetate groups of uroporphyrinogen-III to yield coproporphyrinogen-III. This Actinobacillus pleuropneumoniae serotype 5b (strain L20) protein is Uroporphyrinogen decarboxylase.